The sequence spans 218 residues: ATP phosphoribosyltransferase (218 aa).

It belongs to the ATP phosphoribosyltransferase family. Short subfamily. As to quaternary structure, heteromultimer composed of HisG and HisZ subunits.

Its subcellular location is the cytoplasm. The enzyme catalyses 1-(5-phospho-beta-D-ribosyl)-ATP + diphosphate = 5-phospho-alpha-D-ribose 1-diphosphate + ATP. The protein operates within amino-acid biosynthesis; L-histidine biosynthesis; L-histidine from 5-phospho-alpha-D-ribose 1-diphosphate: step 1/9. Its function is as follows. Catalyzes the condensation of ATP and 5-phosphoribose 1-diphosphate to form N'-(5'-phosphoribosyl)-ATP (PR-ATP). Has a crucial role in the pathway because the rate of histidine biosynthesis seems to be controlled primarily by regulation of HisG enzymatic activity. This is ATP phosphoribosyltransferase from Burkholderia thailandensis (strain ATCC 700388 / DSM 13276 / CCUG 48851 / CIP 106301 / E264).